The chain runs to 283 residues: Diaminopimelate epimerase (283 aa).

2 residues coordinate substrate: asparagine 11 and asparagine 65. The active-site Proton donor is cysteine 74. Residues 75–76, asparagine 163, asparagine 196, and 214–215 contribute to the substrate site; these read GN and ER. Cysteine 223 serves as the catalytic Proton acceptor. 224–225 lines the substrate pocket; sequence GT.

It belongs to the diaminopimelate epimerase family. As to quaternary structure, homodimer.

The protein localises to the cytoplasm. It carries out the reaction (2S,6S)-2,6-diaminopimelate = meso-2,6-diaminopimelate. It participates in amino-acid biosynthesis; L-lysine biosynthesis via DAP pathway; DL-2,6-diaminopimelate from LL-2,6-diaminopimelate: step 1/1. Its function is as follows. Catalyzes the stereoinversion of LL-2,6-diaminopimelate (L,L-DAP) to meso-diaminopimelate (meso-DAP), a precursor of L-lysine and an essential component of the bacterial peptidoglycan. The chain is Diaminopimelate epimerase from Desulfitobacterium hafniense (strain DSM 10664 / DCB-2).